Consider the following 32-residue polypeptide: Acetolactate synthase, catabolic (32 aa).

The protein belongs to the TPP enzyme family. As to quaternary structure, homodimer.

The enzyme catalyses 2 pyruvate + H(+) = (2S)-2-acetolactate + CO2. Its pathway is polyol metabolism; (R,R)-butane-2,3-diol biosynthesis; (R,R)-butane-2,3-diol from pyruvate: step 1/3. This is Acetolactate synthase, catabolic (budB) from Klebsiella aerogenes (Enterobacter aerogenes).